A 659-amino-acid chain; its full sequence is Cytochrome bo(3) ubiquinol oxidase subunit 1 (659 aa).

Residues 1-14 lie on the Extracellular side of the membrane; sequence MFGKLTLKAIPVDE. A helical transmembrane segment spans residues 15–35; that stretch reads PIIMVTYISIILIALFISFSI. Residues 36 to 58 are Cytoplasmic-facing; the sequence is TYFKKWKYLWYEWFTTVDHKKIS. Residues 59–79 form a helical membrane-spanning segment; sequence IMYGILAFIMLFRGFVDAILM. The a ubiquinone site is built by Arg-71, Asp-75, and His-98. Topologically, residues 80 to 106 are extracellular; the sequence is RTQQVIASSGNTGFLPPHHYDQIFTAH. His-106 provides a ligand contact to heme b. Residues 107–127 form a helical membrane-spanning segment; that stretch reads GVIMIFFVAMPLVIGLMNLVV. The Cytoplasmic segment spans residues 128–145; the sequence is PLQIGARDVAFPFLNNLS. Residues 146–166 traverse the membrane as a helical segment; the sequence is FWLNVSGAILLTLSLGIGEFA. Residues 167-189 are Extracellular-facing; the sequence is QTGWLAYPPLSEVKYSPGVGVDY. Trp-170 is a heme b binding site. The helical transmembrane segment at 190–210 threads the bilayer; the sequence is WIWSLQISGVGTTLTGINFLI. Over 211-225 the chain is Cytoplasmic; the sequence is TILKMRAPGMCFFKM. A helical transmembrane segment spans residues 226-246; that stretch reads PVFTWAALCTNILIVISFPVL. Topologically, residues 247–277 are extracellular; it reads TTTLLLLTLDRCFDFHFFTNNFGGNPMMYVN. Residues 278-298 form a helical membrane-spanning segment; it reads LIWIWGHPEVYILVLPVFGVF. His-284 serves as a coordination point for Cu(2+). The segment at residues 284 to 288 is a cross-link (1'-histidyl-3'-tyrosine (His-Tyr)); sequence HPEVY. A Fe(II)-heme o-binding site is contributed by Tyr-288. Topologically, residues 299–309 are cytoplasmic; it reads SEVVATFSKKR. Residues 310–330 form a helical membrane-spanning segment; it reads LFGYVSLVWATLAITILSFIV. The Extracellular segment spans residues 331–347; the sequence is WLHHFFTMGAGSNVNAF. Cu(2+) contacts are provided by His-333 and His-334. Residues 348–368 traverse the membrane as a helical segment; sequence FGITTMIIAIPTGVKIFNWLF. Over 369–380 the chain is Cytoplasmic; sequence TMYQGRVHMHSS. A helical transmembrane segment spans residues 381–401; the sequence is MLWTIGFLITFSIGGMTGVLL. The Extracellular portion of the chain corresponds to 402 to 413; sequence SIPPADFILHNS. The Fe(II)-heme o site is built by His-411 and His-419. A helical transmembrane segment spans residues 414-434; it reads LFLVAHFHNVIIGGVVFGCFA. His-421 is a heme b binding site. Over 435–456 the chain is Cytoplasmic; sequence GINYWFPKLFGFILNELWGKRA. The chain crosses the membrane as a helical span at residues 457–477; the sequence is FWFWIIGFFTAFMPLYFLGFM. At 478–490 the chain is on the extracellular side; sequence GMTRRLSQNIDIE. 2 residues coordinate heme b: Arg-481 and Arg-482. A helical transmembrane segment spans residues 491–511; sequence FHFLLSIAAIGAILIGIGILC. Residues 512–580 lie on the Cytoplasmic side of the membrane; it reads QIIQFWVSVR…KNQVQKKQYS (69 aa). The chain crosses the membrane as a helical span at residues 581–601; the sequence is AIHMPKNTGLGIFISFFSLLF. The Extracellular segment spans residues 602–605; the sequence is GFSA. A helical transmembrane segment spans residues 606–626; it reads VWNIIWLSFLSFLVVIISLIF. Topologically, residues 627-659 are cytoplasmic; sequence KSIDENTEYTVSVKEIESIENRHLENVQKAGLK.

This sequence belongs to the heme-copper respiratory oxidase family. As to quaternary structure, the cytochrome bo(3) ubiquinol oxidase complex is a heterooctamer of two A chains, two B chains, two C chains and two D chains. Cu(2+) is required as a cofactor. It depends on heme b as a cofactor. Requires Fe(II)-heme o as cofactor.

The protein localises to the cell membrane. The catalysed reaction is 2 a ubiquinol + O2 + n H(+)(in) = 2 a ubiquinone + 2 H2O + n H(+)(out). Functionally, cytochrome bo(3) ubiquinol oxidase is the terminal enzyme in the aerobic respiratory chain. Catalyzes the four-electron reduction of O2 to water, using a ubiquinol as a membrane soluble electron donor for molecular oxygen reduction. Has proton pump activity across the membrane in addition to electron transfer, pumping 2 protons/electron and generating a proton motive force. All the redox centers of this enzyme complex are located within the largest subunit, subunit I. Protons are probably pumped via D- and K- channels found in this subunit. This Buchnera aphidicola subsp. Schizaphis graminum (strain Sg) protein is Cytochrome bo(3) ubiquinol oxidase subunit 1 (cyoB).